The following is a 418-amino-acid chain: Putative competence-damage inducible protein (418 aa).

Belongs to the CinA family.

In Streptococcus pneumoniae serotype 19F (strain G54), this protein is Putative competence-damage inducible protein.